A 353-amino-acid chain; its full sequence is Guanine nucleotide-binding protein subunit beta-5 (353 aa).

7 WD repeats span residues 61 to 100 (GHGN…KEHA), 103 to 142 (MPCT…NENM), 151 to 192 (MHTN…QSFH), 194 to 236 (HGAD…QAFE), 237 to 276 (THES…EVAI), 278 to 320 (SKES…RVSI), and 323 to 352 (GHEN…LRVW).

The protein belongs to the WD repeat G protein beta family. In terms of assembly, component of a complex composed of RGS9 (isoform RGS9-1), GNB5 and RGS9BP; within this complex, the presence of GNB5 stabilizes both itself and RGS9 and increases RGS9 GTPase-activating protein (GAP) activity. Interacts with RGS7, forming the RGS7-GNB5 complex; within this complex, the presence of GNB5 increases RGS7 GTPase-activating protein (GAP) activity. Interacts with GPR158; promotes the GTPase activator activity of the RGS7-GNB5 complex in absence of glycine, in contrast GTPase activator activity of the RGS7-GNB5 complex is inhibited in presence of glycine. Interacts with RGS6. Detected in brain.

Its subcellular location is the membrane. Functionally, enhances GTPase-activating protein (GAP) activity of regulator of G protein signaling (RGS) proteins, such as RGS7 and RGS9, hence involved in the termination of the signaling initiated by the G protein coupled receptors (GPCRs) by accelerating the GTP hydrolysis on the G-alpha subunits, thereby promoting their inactivation. Increases RGS7 GTPase-activating protein (GAP) activity, thereby regulating mood and cognition. Increases RGS9 GTPase-activating protein (GAP) activity, hence contributes to the deactivation of G protein signaling initiated by D(2) dopamine receptors. May play an important role in neuronal signaling, including in the parasympathetic, but not sympathetic, control of heart rate. The sequence is that of Guanine nucleotide-binding protein subunit beta-5 (Gnb5) from Rattus norvegicus (Rat).